Here is a 214-residue protein sequence, read N- to C-terminus: N-(5'-phosphoribosyl)anthranilate isomerase (214 aa).

Belongs to the TrpF family.

The catalysed reaction is N-(5-phospho-beta-D-ribosyl)anthranilate = 1-(2-carboxyphenylamino)-1-deoxy-D-ribulose 5-phosphate. The protein operates within amino-acid biosynthesis; L-tryptophan biosynthesis; L-tryptophan from chorismate: step 3/5. In Halorubrum lacusprofundi (strain ATCC 49239 / DSM 5036 / JCM 8891 / ACAM 34), this protein is N-(5'-phosphoribosyl)anthranilate isomerase.